Reading from the N-terminus, the 262-residue chain is DNA repair protein RecO (262 aa).

It belongs to the RecO family.

Functionally, involved in DNA repair and RecF pathway recombination. In Enterococcus faecalis (strain ATCC 700802 / V583), this protein is DNA repair protein RecO.